Consider the following 334-residue polypeptide: S-adenosylmethionine decarboxylase proenzyme (334 aa).

Residue phenylalanine 7 participates in substrate binding. Residues glutamate 8 and glutamate 11 contribute to the active site. A substrate-binding site is contributed by glutamate 67. Catalysis depends on serine 68, which acts as the Schiff-base intermediate with substrate; via pyruvic acid. At serine 68 the chain carries Pyruvic acid (Ser); by autocatalysis. Cysteine 82 (proton donor; for catalytic activity) is an active-site residue. Phenylalanine 223 contacts substrate. Residues serine 229 and histidine 243 each act as proton acceptor; for processing activity in the active site. Glutamate 247 is a substrate binding site. The residue at position 298 (serine 298) is a Phosphoserine.

The protein belongs to the eukaryotic AdoMetDC family. As to quaternary structure, heterotetramer of two alpha and two beta chains. Pyruvate serves as cofactor. Is synthesized initially as an inactive proenzyme. Formation of the active enzyme involves a self-maturation process in which the active site pyruvoyl group is generated from an internal serine residue via an autocatalytic post-translational modification. Two non-identical subunits are generated from the proenzyme in this reaction, and the pyruvate is formed at the N-terminus of the alpha chain, which is derived from the carboxyl end of the proenzyme. The post-translation cleavage follows an unusual pathway, termed non-hydrolytic serinolysis, in which the side chain hydroxyl group of the serine supplies its oxygen atom to form the C-terminus of the beta chain, while the remainder of the serine residue undergoes an oxidative deamination to produce ammonia and the pyruvoyl group blocking the N-terminus of the alpha chain.

It catalyses the reaction S-adenosyl-L-methionine + H(+) = S-adenosyl 3-(methylsulfanyl)propylamine + CO2. The protein operates within amine and polyamine biosynthesis; S-adenosylmethioninamine biosynthesis; S-adenosylmethioninamine from S-adenosyl-L-methionine: step 1/1. Functionally, essential for biosynthesis of the polyamines spermidine and spermine. Promotes maintenance and self-renewal of embryonic stem cells, by maintaining spermine levels. The sequence is that of S-adenosylmethionine decarboxylase proenzyme (AMD1) from Mesocricetus auratus (Golden hamster).